Consider the following 189-residue polypeptide: Protein shisa-like-2A (189 aa).

The next 2 helical transmembrane spans lie at 48–68 (SFFP…LVGL) and 70–90 (TAAV…YLFI). Residues 98 to 189 (LDPGLSLQTT…PTPGPHGPVP (92 aa)) are disordered. Polar residues predominate over residues 140–171 (NTHLESNKKQTVSPTCLPQNQFMATVTASNIP).

It belongs to the shisa family.

It is found in the membrane. This is Protein shisa-like-2A (Shisal2a) from Mus musculus (Mouse).